The following is a 638-amino-acid chain: 1-deoxy-D-xylulose-5-phosphate synthase (638 aa).

Residues His79 and Ala120–Ser122 each bind thiamine diphosphate. A Mg(2+)-binding site is contributed by Asp151. Thiamine diphosphate is bound by residues Gly152–Ala153, Asn180, Tyr289, and Glu371. Asn180 contacts Mg(2+).

Belongs to the transketolase family. DXPS subfamily. In terms of assembly, homodimer. It depends on Mg(2+) as a cofactor. Thiamine diphosphate serves as cofactor.

It carries out the reaction D-glyceraldehyde 3-phosphate + pyruvate + H(+) = 1-deoxy-D-xylulose 5-phosphate + CO2. It functions in the pathway metabolic intermediate biosynthesis; 1-deoxy-D-xylulose 5-phosphate biosynthesis; 1-deoxy-D-xylulose 5-phosphate from D-glyceraldehyde 3-phosphate and pyruvate: step 1/1. In terms of biological role, catalyzes the acyloin condensation reaction between C atoms 2 and 3 of pyruvate and glyceraldehyde 3-phosphate to yield 1-deoxy-D-xylulose-5-phosphate (DXP). The chain is 1-deoxy-D-xylulose-5-phosphate synthase from Rhizobium rhizogenes (strain K84 / ATCC BAA-868) (Agrobacterium radiobacter).